Reading from the N-terminus, the 143-residue chain is Large ribosomal subunit protein uL13 (143 aa).

It belongs to the universal ribosomal protein uL13 family. As to quaternary structure, part of the 50S ribosomal subunit.

This protein is one of the early assembly proteins of the 50S ribosomal subunit, although it is not seen to bind rRNA by itself. It is important during the early stages of 50S assembly. The chain is Large ribosomal subunit protein uL13 from Methanosarcina acetivorans (strain ATCC 35395 / DSM 2834 / JCM 12185 / C2A).